The following is a 61-amino-acid chain: Metallothionein-2 (61 aa).

Met-1 bears the N-acetylmethionine mark. Positions 1–29 are beta; the sequence is MDPNCSCTAGESCTCAGSCKCKDCKCASC. A divalent metal cation-binding residues include Cys-5, Cys-7, Cys-13, Cys-15, Cys-19, Cys-21, Cys-24, Cys-26, Cys-29, Cys-33, Cys-34, Cys-36, Cys-37, Cys-41, Cys-44, Cys-48, Cys-50, and Cys-57. Positions 30 to 61 are alpha; that stretch reads KKSCCSCCPVGCAKCAQGCVCKGASDKCSCCA. Ser-58 carries the phosphoserine modification. Cys-59 and Cys-60 together coordinate a divalent metal cation.

The protein belongs to the metallothionein superfamily. Type 1 family. Interacts with EOLA1.

Metallothioneins have a high content of cysteine residues that bind various heavy metals; these proteins are transcriptionally regulated by both heavy metals and glucocorticoids. The sequence is that of Metallothionein-2 (MT2A) from Ovis aries (Sheep).